The following is a 198-amino-acid chain: tRNA (pseudouridine(54)-N(1))-methyltransferase (198 aa).

S-adenosyl-L-methionine is bound by residues L130, G153, 176 to 181 (LSPLEL), and C186.

This sequence belongs to the methyltransferase superfamily. TrmY family. As to quaternary structure, homodimer.

It localises to the cytoplasm. It carries out the reaction pseudouridine(54) in tRNA + S-adenosyl-L-methionine = N(1)-methylpseudouridine(54) in tRNA + S-adenosyl-L-homocysteine + H(+). Specifically catalyzes the N1-methylation of pseudouridine at position 54 (Psi54) in tRNAs. This chain is tRNA (pseudouridine(54)-N(1))-methyltransferase, found in Methanococcus maripaludis (strain C6 / ATCC BAA-1332).